The primary structure comprises 274 residues: Large ribosomal subunit protein uL2cz/uL2cy (274 aa).

Disordered stretches follow at residues 1 to 21 (MAIH…VDSQ) and 225 to 274 (PVDH…RRSK).

The protein belongs to the universal ribosomal protein uL2 family. In terms of assembly, part of the 50S ribosomal subunit.

It localises to the plastid. The protein resides in the chloroplast. The protein is Large ribosomal subunit protein uL2cz/uL2cy (rpl2-A) of Gossypium barbadense (Sea Island cotton).